The following is a 407-amino-acid chain: Na(+)-translocating NADH-quinone reductase subunit F (407 aa).

A helical membrane pass occupies residues 3 to 23 (IILGVVMFTLIVLALTVMILF). The region spanning 32–126 (GDITIDINED…NLKIELPEEI (95 aa)) is the 2Fe-2S ferredoxin-type domain. The [2Fe-2S] cluster site is built by C69, C75, C78, and C110. The 141-residue stretch at 129-269 (VKKWECEVIS…SGPFGEFFAK (141 aa)) folds into the FAD-binding FR-type domain.

This sequence belongs to the NqrF family. Composed of six subunits; NqrA, NqrB, NqrC, NqrD, NqrE and NqrF. [2Fe-2S] cluster serves as cofactor. It depends on FAD as a cofactor.

The protein resides in the cell inner membrane. The catalysed reaction is a ubiquinone + n Na(+)(in) + NADH + H(+) = a ubiquinol + n Na(+)(out) + NAD(+). Functionally, NQR complex catalyzes the reduction of ubiquinone-1 to ubiquinol by two successive reactions, coupled with the transport of Na(+) ions from the cytoplasm to the periplasm. The first step is catalyzed by NqrF, which accepts electrons from NADH and reduces ubiquinone-1 to ubisemiquinone by a one-electron transfer pathway. The polypeptide is Na(+)-translocating NADH-quinone reductase subunit F (Yersinia enterocolitica serotype O:8 / biotype 1B (strain NCTC 13174 / 8081)).